Reading from the N-terminus, the 817-residue chain is E3 ubiquitin-protein ligase TRIM9 (817 aa).

Residues 10 to 50 form an RING-type zinc finger; that stretch reads CPVCGSFYREPIILPCSHNLCQACARNILVQTPESESPQSR. At Thr41 the chain carries Phosphothreonine. A phosphoserine mark is found at Ser44, Ser46, Ser49, and Ser53. 2 consecutive B box-type zinc fingers follow at residues 163–212 and 224–266; these read AAAL…LVPP and RKVS…VKAL. Zn(2+) is bound by residues Cys168, Cys171, Cys193, His198, Cys229, His232, Cys252, and His258. Residues 273 to 340 adopt a coiled-coil conformation; it reads HKSQLSQALN…KAQLLARVNK (68 aa). In terms of domain architecture, COS spans 374 to 432; it reads IKENDPSGFLQISDALIRRVHLTEDQWGKGTLTPRMTTDFDLSLDNSPLLQSIHQLDFV. The 96-residue stretch at 440–535 folds into the Fibronectin type-III domain; it reads VPATPILQLE…KTLVLQTSEA (96 aa). The tract at residues 535–557 is disordered; sequence AAGAHETKPMKDTDSEEQTLPFP. Basic and acidic residues predominate over residues 537–547; it reads GAHETKPMKDT. Residues 613 to 794 enclose the B30.2/SPRY domain; it reads ETQSASYSQL…VQVSLWAPGL (182 aa).

This sequence belongs to the TRIM/RBCC family. As to quaternary structure, interacts with SNAP25. Auto-ubiquitinated. In terms of tissue distribution, brain. Expression is higher in the cerebral cortex and hippocampus (at protein level). Its expression is mainly confined to the central nervous system. The developing neocortex, the dorsal thalamus, the midbrain, the basal area of the hindbrain and spinal cord show high level of expression during embryogenesis. In adult brain, it is detected in the Purkinje cells of the cerebellum, in the hippocampus, and in the cortex.

The protein localises to the cytoplasm. Its subcellular location is the cell projection. The protein resides in the dendrite. It localises to the cytoplasmic vesicle. It is found in the secretory vesicle. The protein localises to the synaptic vesicle. Its subcellular location is the synapse. The protein resides in the cytoskeleton. It catalyses the reaction S-ubiquitinyl-[E2 ubiquitin-conjugating enzyme]-L-cysteine + [acceptor protein]-L-lysine = [E2 ubiquitin-conjugating enzyme]-L-cysteine + N(6)-ubiquitinyl-[acceptor protein]-L-lysine.. The protein operates within protein modification; protein ubiquitination. E3 ubiquitin-protein ligase which ubiquitinates itself in cooperation with an E2 enzyme UBE2D2/UBC4 and serves as a targeting signal for proteasomal degradation. May play a role in regulation of neuronal functions. May act as a regulator of synaptic vesicle exocytosis by controlling the availability of SNAP25 for the SNARE complex formation. The sequence is that of E3 ubiquitin-protein ligase TRIM9 (Trim9) from Mus musculus (Mouse).